Reading from the N-terminus, the 504-residue chain is Maturase K (504 aa).

It belongs to the intron maturase 2 family. MatK subfamily.

It is found in the plastid. The protein localises to the chloroplast. Its function is as follows. Usually encoded in the trnK tRNA gene intron. Probably assists in splicing its own and other chloroplast group II introns. The sequence is that of Maturase K from Berzelia lanuginosa (Buttonbush).